We begin with the raw amino-acid sequence, 230 residues long: 2,3-bisphosphoglycerate-dependent phosphoglycerate mutase (230 aa).

Residues 8 to 15 (RHGESEWN), 21 to 22 (TG), Arg-60, 87 to 90 (ERHY), Lys-98, 114 to 115 (RR), and 183 to 184 (GN) contribute to the substrate site. The active-site Tele-phosphohistidine intermediate is His-9. Glu-87 acts as the Proton donor/acceptor in catalysis.

It belongs to the phosphoglycerate mutase family. BPG-dependent PGAM subfamily.

The catalysed reaction is (2R)-2-phosphoglycerate = (2R)-3-phosphoglycerate. The protein operates within carbohydrate degradation; glycolysis; pyruvate from D-glyceraldehyde 3-phosphate: step 3/5. Catalyzes the interconversion of 2-phosphoglycerate and 3-phosphoglycerate. This is 2,3-bisphosphoglycerate-dependent phosphoglycerate mutase from Streptococcus thermophilus (strain CNRZ 1066).